Here is a 223-residue protein sequence, read N- to C-terminus: DNA mismatch repair protein MutH (223 aa).

This sequence belongs to the MutH family.

Its subcellular location is the cytoplasm. Its function is as follows. Sequence-specific endonuclease that cleaves unmethylated GATC sequences. It is involved in DNA mismatch repair. In Haemophilus influenzae (strain ATCC 51907 / DSM 11121 / KW20 / Rd), this protein is DNA mismatch repair protein MutH.